Consider the following 156-residue polypeptide: MFSAWDRRERPPEEGAAAGLQGFGVDKTFLSSLKGILLETELALTFIIFICFTASISAYMAAALLEFLITLAFLFLCATQYYQRFDRLNWPCLDFLRCLSAIVIFLVVSFAAVTSREGAAIAAFVFGIILVSVFAYDAFKIYRTELMPSTTEGDQQ.

Residues 29–146 (FLSSLKGILL…DAFKIYRTEL (118 aa)) form the MARVEL domain. 4 helical membrane passes run 35-55 (GILLETELALTFIIFICFTAS), 56-76 (ISAYMAAALLEFLITLAFLFL), 93-113 (LDFLRCLSAIVIFLVVSFAAV), and 119-139 (AAIAAFVFGIILVSVFAYDAF).

Belongs to the chemokine-like factor family.

It is found in the membrane. This chain is CKLF-like MARVEL transmembrane domain-containing protein 5 (Cmtm5), found in Mus musculus (Mouse).